The primary structure comprises 836 residues: V-type proton ATPase subunit C (836 aa).

The span at Leu116–Gln144 shows a compositional bias: basic residues. Disordered stretches follow at residues Leu116 to Pro169, Ala302 to Ser403, Lys415 to Asn453, and Pro496 to Pro544. Pro residues predominate over residues Ala160 to Pro169. A compositionally biased stretch (low complexity) spans Ala302–Ser316. Polar residues-rich tracts occupy residues Lys319–Thr348 and Thr364–Ser374. Residues Ala425–Gln450 are compositionally biased toward low complexity. Over residues Pro496–His511 the composition is skewed to polar residues. Positions Arg512–Ser529 are enriched in low complexity.

Belongs to the V-ATPase C subunit family. V-ATPase is a heteromultimeric enzyme made up of two complexes: the ATP-hydrolytic V1 complex and the proton translocation V0 complex. The V1 complex consists of three catalytic AB heterodimers that form a heterohexamer, three peripheral stalks each consisting of EG heterodimers, one central rotor including subunits D and F, and the regulatory subunits C and H. The proton translocation complex V0 consists of the proton transport subunit a, a ring of proteolipid subunits c9c'', rotary subunit d, subunits e and f, and the accessory subunits VhaAC45 and ATP6AP2. In terms of tissue distribution, in larvae, expressed in the ring gland, CNS, imaginal disks and lymph gland.

Functionally, subunit of the V1 complex of vacuolar(H+)-ATPase (V-ATPase), a multisubunit enzyme composed of a peripheral complex (V1) that hydrolyzes ATP and a membrane integral complex (V0) that translocates protons. V-ATPase is responsible for acidifying and maintaining the pH of intracellular compartments and in some cell types, is targeted to the plasma membrane, where it is responsible for acidifying the extracellular environment. Subunit C is necessary for the assembly of the catalytic sector of the enzyme and is likely to have a specific function in its catalytic activity. In enterocytes, acts as part of a pHCl-2 sensory pathway which mediates Tor-dependent larval growth and metabolism in response to zinc availability. Likely acts in maintaining enterocyte lysosomal acidification which consequently promotes Tor activation at the lysosome membrane. This chain is V-type proton ATPase subunit C (Vha44), found in Drosophila melanogaster (Fruit fly).